The chain runs to 383 residues: Lipid-A-disaccharide synthase (383 aa).

It belongs to the LpxB family.

The catalysed reaction is a lipid X + a UDP-2-N,3-O-bis[(3R)-3-hydroxyacyl]-alpha-D-glucosamine = a lipid A disaccharide + UDP + H(+). It participates in bacterial outer membrane biogenesis; LPS lipid A biosynthesis. Functionally, condensation of UDP-2,3-diacylglucosamine and 2,3-diacylglucosamine-1-phosphate to form lipid A disaccharide, a precursor of lipid A, a phosphorylated glycolipid that anchors the lipopolysaccharide to the outer membrane of the cell. The protein is Lipid-A-disaccharide synthase of Myxococcus xanthus (strain DK1622).